We begin with the raw amino-acid sequence, 599 residues long: Fructan 1-exohydrolase (599 aa).

Positions 1-16 (MAQAWAFLLLPALALA) are cleaved as a signal peptide. The active site involves aspartate 78. Residues asparagine 171, asparagine 239, and asparagine 251 are each glycosylated (N-linked (GlcNAc...) asparagine). The cysteines at positions 449 and 495 are disulfide-linked.

It belongs to the glycosyl hydrolase 32 family.

The enzyme catalyses Hydrolysis of terminal, non-reducing (2-&gt;1)-linked beta-D-fructofuranose residues in fructans.. Its activity is regulated as follows. Inhibited by sucrose. In terms of biological role, hydrolyzes inulin-type beta-(2,1)-fructans. May play a role as a beta-(2,1)-trimmer during graminan biosynthesis. The protein is Fructan 1-exohydrolase of Hordeum vulgare (Barley).